We begin with the raw amino-acid sequence, 570 residues long: Frizzled-2 (570 aa).

Residues 1–28 (MRARSALPRSALPRLLLPLLLLPAAGPA) form the signal peptide. Topologically, residues 29-252 (QFHGEKGISI…QEETRFARLW (224 aa)) are extracellular. Positions 39-158 (PDHGFCQPIS…HGAEQICVGQ (120 aa)) constitute an FZ domain. Intrachain disulfides connect Cys-44-Cys-105, Cys-52-Cys-98, Cys-89-Cys-126, Cys-115-Cys-155, and Cys-119-Cys-143. An N-linked (GlcNAc...) asparagine glycan is attached at Asn-58. N-linked (GlcNAc...) asparagine glycosylation is present at Asn-159. Residues 166–194 (PALLTTAPPSGLQPGAGGTPGGPGGGGSP) are disordered. Positions 179 to 193 (PGAGGTPGGPGGGGS) are enriched in gly residues. Residues 253–273 (ILTWSVLCCASTFFTVTTYLV) form a helical membrane-spanning segment. Residues 274–284 (DMQRFRYPERP) lie on the Cytoplasmic side of the membrane. The helical transmembrane segment at 285–305 (IIFLSGCYTMVSVAYIAGFVL) threads the bilayer. The Extracellular portion of the chain corresponds to 306–332 (QERVVCNERFSEDGYRTVVQGTKKEGC). A helical transmembrane segment spans residues 333 to 353 (TILFMMLYFFSMASSIWWVIL). Residues 354–375 (SLTWFLAAGMKWGHEAIEANSQ) lie on the Cytoplasmic side of the membrane. A helical membrane pass occupies residues 376-396 (YFHLAAWAVPAVKTITILAMG). Topologically, residues 397 to 419 (QIDGDLLSGVCFVGLNSLDPLRG) are extracellular. Residues 420-440 (FVLAPLFVYLFIGTSFLLAGF) form a helical membrane-spanning segment. The Cytoplasmic segment spans residues 441-466 (VSLFRIRTIMKHDGTKTEKLERLMVR). A helical transmembrane segment spans residues 467–487 (IGVFSVLYTVPATIVIACYFY). Residues 488–524 (EQAFREHWERSWVSQHCKSLAIPCPAHYTPRMSPDFT) lie on the Extracellular side of the membrane. Residues 525–545 (VYMIKYLMTLIVGITSGFWIW) traverse the membrane as a helical segment. The Cytoplasmic portion of the chain corresponds to 546 to 570 (SGKTLHSWRKFYTRLTNSRHGETTV). The short motif at 548–553 (KTLHSW) is the Lys-Thr-X-X-X-Trp motif, mediates interaction with the PDZ domain of Dvl family members element. A PDZ-binding motif is present at residues 568–570 (TTV).

It belongs to the G-protein coupled receptor Fz/Smo family. Ubiquitinated by ZNRF3, leading to its degradation by the proteasome. Expressed in embryonic and adult heart, lung, chondrocytes and brain. Also expressed in the developing gastrointestinal tract (strongest in foregut), much weaker expression in the adult. No expression in fetal liver and adult spleen. Up-regulated in esophageal squamous cell carcinomas.

The protein resides in the membrane. It is found in the cell membrane. Its function is as follows. Receptor for Wnt proteins. Most of frizzled receptors are coupled to the beta-catenin canonical signaling pathway, which leads to the activation of disheveled proteins, inhibition of GSK-3 kinase, nuclear accumulation of beta-catenin and activation of Wnt target genes. A second signaling pathway involving PKC and calcium fluxes has been seen for some family members, but it is not yet clear if it represents a distinct pathway or if it can be integrated in the canonical pathway, as PKC seems to be required for Wnt-mediated inactivation of GSK-3 kinase. Both pathways seem to involve interactions with G-proteins. May be involved in transduction and intercellular transmission of polarity information during tissue morphogenesis and/or in differentiated tissues. The chain is Frizzled-2 (Fzd2) from Mus musculus (Mouse).